A 128-amino-acid chain; its full sequence is Small ribosomal subunit protein uS11 (128 aa).

Belongs to the universal ribosomal protein uS11 family. Part of the 30S ribosomal subunit. Interacts with proteins S7 and S18. Binds to IF-3.

Its function is as follows. Located on the platform of the 30S subunit, it bridges several disparate RNA helices of the 16S rRNA. Forms part of the Shine-Dalgarno cleft in the 70S ribosome. This Methylococcus capsulatus (strain ATCC 33009 / NCIMB 11132 / Bath) protein is Small ribosomal subunit protein uS11.